Consider the following 345-residue polypeptide: Transcription initiation factor IIB (345 aa).

A TFIIB-type zinc finger spans residues Val8 to Ala40. 4 residues coordinate Zn(2+): Cys12, Cys15, Cys32, and Cys35. Disordered stretches follow at residues Asp59–Ser89 and Pro318–Thr345. Residues Thr71–Ala83 are compositionally biased toward low complexity.

The protein belongs to the TFIIB family. In terms of assembly, monomer. Interacts with RNA polymerase II subunits RPB1 and RPB2. Interacts with TBP; the interaction is direct.

It is found in the nucleus. Specifically binds to the promoter of the spliced leader (SL) RNA gene and thus is essential for SLRNA transcription. The protein is Transcription initiation factor IIB of Trypanosoma brucei brucei.